We begin with the raw amino-acid sequence, 208 residues long: Small ribosomal subunit protein uS4 (208 aa).

Residues 95–157 (RRIDNIVYRA…DSLKKLIRSN (63 aa)) form the S4 RNA-binding domain.

The protein belongs to the universal ribosomal protein uS4 family. In terms of assembly, part of the 30S ribosomal subunit. Contacts protein S5. The interaction surface between S4 and S5 is involved in control of translational fidelity.

Functionally, one of the primary rRNA binding proteins, it binds directly to 16S rRNA where it nucleates assembly of the body of the 30S subunit. With S5 and S12 plays an important role in translational accuracy. The polypeptide is Small ribosomal subunit protein uS4 (Borrelia garinii subsp. bavariensis (strain ATCC BAA-2496 / DSM 23469 / PBi) (Borreliella bavariensis)).